A 239-amino-acid chain; its full sequence is tRNA (guanine-N(1)-)-methyltransferase (239 aa).

Residues Gly-109 and 128–133 each bind S-adenosyl-L-methionine; that span reads IGDYVL.

It belongs to the RNA methyltransferase TrmD family. Homodimer.

The protein localises to the cytoplasm. It catalyses the reaction guanosine(37) in tRNA + S-adenosyl-L-methionine = N(1)-methylguanosine(37) in tRNA + S-adenosyl-L-homocysteine + H(+). Functionally, specifically methylates guanosine-37 in various tRNAs. The polypeptide is tRNA (guanine-N(1)-)-methyltransferase (Thermus thermophilus (strain ATCC BAA-163 / DSM 7039 / HB27)).